The sequence spans 367 residues: Ganglioside-induced differentiation-associated protein 1-like 1 (367 aa).

The 82-residue stretch at 45-126 (ESLVLYHWTQ…YVERTFTGEH (82 aa)) folds into the GST N-terminal domain. The region spanning 174 to 341 (PKYATAEIRR…RLVKRKPPSF (168 aa)) is the GST C-terminal domain.

The protein belongs to the GST superfamily.

The chain is Ganglioside-induced differentiation-associated protein 1-like 1 (GDAP1L1) from Homo sapiens (Human).